The chain runs to 499 residues: Glycerol kinase (499 aa).

Residue Thr-13 coordinates ADP. The ATP site is built by Thr-13, Thr-14, and Ser-15. Thr-13 lines the sn-glycerol 3-phosphate pocket. Arg-17 serves as a coordination point for ADP. Residues Arg-83, Glu-84, Tyr-135, and Asp-244 each coordinate sn-glycerol 3-phosphate. Residues Arg-83, Glu-84, Tyr-135, Asp-244, and Gln-245 each contribute to the glycerol site. Residues Thr-266 and Gly-309 each coordinate ADP. Residues Thr-266, Gly-309, Gln-313, and Gly-410 each contribute to the ATP site. Residues Gly-410 and Asn-414 each coordinate ADP.

It belongs to the FGGY kinase family.

It catalyses the reaction glycerol + ATP = sn-glycerol 3-phosphate + ADP + H(+). Its pathway is polyol metabolism; glycerol degradation via glycerol kinase pathway; sn-glycerol 3-phosphate from glycerol: step 1/1. Inhibited by fructose 1,6-bisphosphate (FBP). In terms of biological role, key enzyme in the regulation of glycerol uptake and metabolism. Catalyzes the phosphorylation of glycerol to yield sn-glycerol 3-phosphate. In Paraburkholderia phymatum (strain DSM 17167 / CIP 108236 / LMG 21445 / STM815) (Burkholderia phymatum), this protein is Glycerol kinase.